Consider the following 394-residue polypeptide: Actin-related protein 2 (394 aa).

The residue at position 1 (Met-1) is an N-acetylmethionine. Residues 160–162 (GDG) and 214–218 (RMIKE) each bind ATP. N6-acetyllysine is present on Lys-299. 305 to 310 (GGSTMY) serves as a coordination point for ATP. Lys-322 is modified (N6-acetyllysine).

Belongs to the actin family. ARP2 subfamily. As to quaternary structure, component of the Arp2/3 complex composed of ACTR2/ARP2, ACTR3/ARP3, ARPC1B/p41-ARC, ARPC2/p34-ARC, ARPC3/p21-ARC, ARPC4/p20-ARC and ARPC5/p16-ARC. Interacts with AVIL.

Its subcellular location is the cytoplasm. It is found in the cytoskeleton. The protein localises to the cell projection. The protein resides in the nucleus. ATP-binding component of the Arp2/3 complex, a multiprotein complex that mediates actin polymerization upon stimulation by nucleation-promoting factor (NPF). The Arp2/3 complex mediates the formation of branched actin networks in the cytoplasm, providing the force for cell motility. Seems to contact the pointed end of the daughter actin filament. In podocytes, required for the formation of lamellipodia downstream of AVIL and PLCE1 regulation. In addition to its role in the cytoplasmic cytoskeleton, the Arp2/3 complex also promotes actin polymerization in the nucleus, thereby regulating gene transcription and repair of damaged DNA. The Arp2/3 complex promotes homologous recombination (HR) repair in response to DNA damage by promoting nuclear actin polymerization, leading to drive motility of double-strand breaks (DSBs). The sequence is that of Actin-related protein 2 (ACTR2) from Pongo abelii (Sumatran orangutan).